The sequence spans 783 residues: Cadherin-5 (783 aa).

The signal sequence occupies residues 1–25 (MQALVMLLATGATYYLGLLAAAAAA). A propeptide spanning residues 26 to 45 (VNPGRPNTPGSLPAHRRQKR) is cleaved from the precursor. Cadherin domains follow at residues 44-149 (KRDW…WPVF), 150-256 (THRV…FPIF), 257-371 (TQNR…PPIF), 372-478 (QQPF…APEF), and 478-585 (FAKP…GEFT). Over 46 to 599 (DWIWNQMHID…AAAQVGISIQ (554 aa)) the chain is Extracellular. Glu-56 and Glu-57 together coordinate Ca(2+). N-linked (GlcNAc...) asparagine glycosylation occurs at Asn-59. 7 residues coordinate Ca(2+): Asp-107, Glu-109, Asp-141, Val-142, Asn-143, Asp-144, and Asn-145. A glycan (N-linked (GlcNAc...) asparagine) is linked at Asn-155. Residues Asp-175, Asp-177, His-184, and Asp-229 each coordinate Ca(2+). Asn-361, Asn-441, and Asn-523 each carry an N-linked (GlcNAc...) asparagine glycan. Residues 600-620 (ALVAIFLCILTFTVITLLIIL) form a helical membrane-spanning segment. Positions 621-660 (RRRLRKQARAHGKSVPEIHEQLVTYDEEGGGEMDTTSYDV) are required for interaction with PALS1. At 621–783 (RRRLRKQARA…GSDPQEELVY (163 aa)) the chain is on the cytoplasmic side.

In terms of assembly, part of a complex composed of AMOTL2, MAGI1 and CDH5, within the complex AMOTL2 acts as a scaffold protein for the interaction of MAGI1 with CDH5. The complex is required for coupling actin fibers to cell junctions in endothelial cells. Within the complex AMOTL2 (via its N-terminus) interacts with CDH5. Interacts (via cadherin 5 domain) with PTPRB. Interacts with TRPC4. Interacts with KRIT1. Interacts with PARD3. Interacts with RTN4 (isoform B). Interacts with PALS1; the interaction promotes PALS1 localization to cell junctions and is required for CDH5-mediated vascular lumen formation and endothelial cell. Interacts with CTNND1/p120-catenin; the interaction controls CADH5 endocytosis. In terms of processing, phosphorylated on tyrosine residues by KDR/VEGFR-2. Dephosphorylated by PTPRB. Post-translationally, O-glycosylated.

The protein resides in the cell junction. Its subcellular location is the adherens junction. The protein localises to the cell membrane. It localises to the cytoplasm. Functionally, cadherins are calcium-dependent cell adhesion proteins. They preferentially interact with themselves in a homophilic manner in connecting cells; cadherins may thus contribute to the sorting of heterogeneous cell types. This cadherin may play a important role in endothelial cell biology through control of the cohesion and organization of the intercellular junctions. It associates with alpha-catenin forming a link to the cytoskeleton. Plays a role in coupling actin fibers to cell junctions in endothelial cells, via acting as a cell junctional complex anchor for AMOTL2 and MAGI1. Acts in concert with KRIT1 and PALS1 to establish and maintain correct endothelial cell polarity and vascular lumen. These effects are mediated by recruitment and activation of the Par polarity complex and RAP1B. Required for activation of PRKCZ and for localization of phosphorylated PRKCZ, PARD3, TIAM1 and RAP1B to the cell junction. Associates with CTNND1/p120-catenin to control CADH5 endocytosis. This chain is Cadherin-5, found in Bos taurus (Bovine).